Consider the following 387-residue polypeptide: G-protein coupled receptor homolog R33 (387 aa).

The Extracellular segment spans residues 1 to 33 (MDVLLGTEELEDELHQLHFNYTCVPSLGLSVAR). Asn20 is a glycosylation site (N-linked (GlcNAc...) asparagine; by host). Residues 34–61 (DAETAVNFLIVLVGGPMNFLVLATQMLS) form a helical membrane-spanning segment. Residues 62 to 71 (NRSYSVSTPT) are Cytoplasmic-facing. The chain crosses the membrane as a helical span at residues 72–94 (LYMTNLYLANLLTVATLPFLMLS). Over 95 to 107 (NRGLVGSSPEGCK) the chain is Extracellular. Residues 108-129 (IAALAYYATCTAGFATLMLIAI) form a helical membrane-spanning segment. Topologically, residues 130-150 (NRYRVIHQRTRSGAGSKRQTY) are cytoplasmic. Residues 151 to 169 (AVLAVTWLASLMCASPAPL) form a helical membrane-spanning segment. The Extracellular segment spans residues 170–204 (YATVMAHDSADALAFETCIIYFSYDQVKTVLATFK). Residues 205–224 (ILITMIWGITPVVMMSWFYV) traverse the membrane as a helical segment. The Cytoplasmic segment spans residues 225–244 (FFYRRLKLTSYRRRSQTLTF). A helical transmembrane segment spans residues 245–268 (VTTLMLSFLVVQTPFVAIMSYDSY). Residues 269–285 (GVLNWPINCDTINKRDA) are Extracellular-facing. A helical transmembrane segment spans residues 286-309 (VSMLARVVPNFHCLLNPVLYAFLG). Over 310 to 387 (RDFNKRFILC…PPPPPPPPNC (78 aa)) the chain is Cytoplasmic. Positions 368 to 387 (RLRALGRPPPPPPPPPPPNC) are disordered. Residues 374-387 (RPPPPPPPPPPPNC) are compositionally biased toward pro residues.

Belongs to the G-protein coupled receptor 1 family.

The protein resides in the host cell membrane. In terms of biological role, plays an important role in vivo, in particular in the dissemination to or replication in the salivary gland. In Rattus, this protein is G-protein coupled receptor homolog R33.